The chain runs to 199 residues: Large ribosomal subunit protein bL25 (199 aa).

The protein belongs to the bacterial ribosomal protein bL25 family. CTC subfamily. In terms of assembly, part of the 50S ribosomal subunit; part of the 5S rRNA/L5/L18/L25 subcomplex. Contacts the 5S rRNA. Binds to the 5S rRNA independently of L5 and L18.

Its function is as follows. This is one of the proteins that binds to the 5S RNA in the ribosome where it forms part of the central protuberance. The protein is Large ribosomal subunit protein bL25 of Chloroherpeton thalassium (strain ATCC 35110 / GB-78).